Here is a 283-residue protein sequence, read N- to C-terminus: K88 fimbrial protein AC (283 aa).

An N-terminal signal peptide occupies residues 1 to 21; the sequence is MKKTLIALAIAASAASGMAHA.

This sequence belongs to the fimbrial K88 protein family. K88 fimbria, 0.1-1 micrometer in length and 7 nanometers in diameter, is composed of about 100 identical subunits.

The protein resides in the fimbrium. In terms of biological role, K88 major fimbrial subunit. Fimbriae (also called pili), are polar filaments radiating from the surface of the bacterium to a length of 0.5-1.5 micrometers and numbering 100-300 per cell. They enable bacteria to colonize the epithelium of specific host organs. This is K88 fimbrial protein AC (faeG) from Escherichia coli.